The sequence spans 457 residues: Serine/threonine-protein phosphatase 2A regulatory subunit B'' subunit gamma (457 aa).

2 consecutive EF-hand domains span residues 276–311 (PSAL…TLTS) and 344–379 (KEPA…IQEQ). Aspartate 289, aspartate 291, asparagine 293, methionine 295, and glutamate 300 together coordinate Ca(2+).

It is found in the nucleus. The protein resides in the cytoplasm. In terms of biological role, possible role in the regulation of cell death. The chain is Serine/threonine-protein phosphatase 2A regulatory subunit B'' subunit gamma (ppp2r3c) from Danio rerio (Zebrafish).